The sequence spans 203 residues: dITP/XTP pyrophosphatase (203 aa).

7–12 (SGNLHK) is a binding site for substrate. Residues Glu-47 and Asp-77 each contribute to the Mg(2+) site. Asp-77 serves as the catalytic Proton acceptor. Substrate contacts are provided by residues Ser-78, 160-163 (FGYD), Lys-183, and 188-189 (HR).

Belongs to the HAM1 NTPase family. As to quaternary structure, homodimer. The cofactor is Mg(2+).

It catalyses the reaction XTP + H2O = XMP + diphosphate + H(+). The enzyme catalyses dITP + H2O = dIMP + diphosphate + H(+). The catalysed reaction is ITP + H2O = IMP + diphosphate + H(+). Functionally, pyrophosphatase that catalyzes the hydrolysis of nucleoside triphosphates to their monophosphate derivatives, with a high preference for the non-canonical purine nucleotides XTP (xanthosine triphosphate), dITP (deoxyinosine triphosphate) and ITP. Seems to function as a house-cleaning enzyme that removes non-canonical purine nucleotides from the nucleotide pool, thus preventing their incorporation into DNA/RNA and avoiding chromosomal lesions. This chain is dITP/XTP pyrophosphatase, found in Opitutus terrae (strain DSM 11246 / JCM 15787 / PB90-1).